A 264-amino-acid chain; its full sequence is Type II iodothyronine deiodinase (264 aa).

Topologically, residues 1–7 are lumenal; the sequence is MGLLSVD. A helical; Signal-anchor for type III membrane protein transmembrane segment spans residues 8-28; it reads LLITLQILPGFFSNCLFLALY. The Cytoplasmic segment spans residues 29–264; the sequence is DSVVLVKHVL…AESGQTGTEK (236 aa). Residue Sec-124 is part of the active site. A non-standard amino acid (selenocysteine) is located at residue Sec-124.

This sequence belongs to the iodothyronine deiodinase family. In terms of assembly, predominantly monomer. Can form homodimers but homodimerization is not essential for enzyme activity. In terms of tissue distribution, high levels seen in the metamorphosing tail.

The protein resides in the endoplasmic reticulum membrane. It catalyses the reaction 3,3',5-triiodo-L-thyronine + iodide + A + H(+) = L-thyroxine + AH2. The catalysed reaction is 3,3'-diiodo-L-thyronine + iodide + A + H(+) = 3,3',5'-triiodo-L-thyronine + AH2. It carries out the reaction 3'-iodo-L-thyronine + iodide + A + H(+) = 3',5'-diiodo-L-thyronine + AH2. The enzyme catalyses 3,3'-diiodothyronamine + iodide + A + H(+) = 3,3',5'-triiodothyronamine + AH2. It catalyses the reaction 3'-iodothyronamine + iodide + A + H(+) = 3',5'-diiodothyronamine + AH2. Its activity is regulated as follows. Not inhibited by N(6)-propylthiouracil. In terms of biological role, plays a crucial role in the metabolism of thyroid hormones (TH) and has specific roles in TH activation and inactivation by deiodination. Catalyzes the deiodination of L-thyroxine (T4) to 3,5,3'-triiodothyronine (T3) and 3',5'-diiodothyronine (3',5'-T2) to 3'-monoiodothyronine (3'-T1) via outer-ring deiodination (ORD). Catalyzes the deiodination of 3,3',5'-triiodothyronine (rT3) to 3,3'-diiodothyronine (3,3'-T2) via ORD. Catalyzes the phenolic ring deiodinations of 3,3',5'-triiodothyronamine and 3',5'- diiodothyronamine. The sequence is that of Type II iodothyronine deiodinase (dio2) from Aquarana catesbeiana (American bullfrog).